The chain runs to 143 residues: Large ribosomal subunit protein uL15 (143 aa).

The disordered stretch occupies residues 1–51 (MRLNSIAPAPGSRPSAKRVGRGIGSGLGKTAGRGHKGQKARAGGYHKVGFE). Gly residues predominate over residues 21 to 31 (RGIGSGLGKTA).

It belongs to the universal ribosomal protein uL15 family. As to quaternary structure, part of the 50S ribosomal subunit.

Its function is as follows. Binds to the 23S rRNA. The chain is Large ribosomal subunit protein uL15 from Thioalkalivibrio sulfidiphilus (strain HL-EbGR7).